A 450-amino-acid chain; its full sequence is Na(+)/H(+) antiporter NhaA (450 aa).

11 consecutive transmembrane segments (helical) span residues 24–44 (FFAI…LALV), 75–95 (LILW…GLEI), 111–131 (ALPI…YLAL), 140–160 (GWGV…SLLG), 169–189 (VFLT…IAFF), 196–216 (FSFL…NWLG), 224–244 (LLVG…ATIA), 318–338 (WVAW…TVSA), 352–372 (IFFG…WLLV), 390–410 (GIGW…TLAF), and 422–442 (SILC…RVLL).

It belongs to the NhaA Na(+)/H(+) (TC 2.A.33) antiporter family.

It localises to the cell inner membrane. The catalysed reaction is Na(+)(in) + 2 H(+)(out) = Na(+)(out) + 2 H(+)(in). In terms of biological role, na(+)/H(+) antiporter that extrudes sodium in exchange for external protons. In Oleidesulfovibrio alaskensis (strain ATCC BAA-1058 / DSM 17464 / G20) (Desulfovibrio alaskensis), this protein is Na(+)/H(+) antiporter NhaA.